The sequence spans 807 residues: cAMP-regulated phosphoprotein 21 (807 aa).

The interval 1–127 is disordered; sequence MSEQGGLTPT…KNREKLSERP (127 aa). N-acetylserine is present on S2. Residue S32 is modified to Phosphoserine. Residues 32–57 adopt a coiled-coil conformation; the sequence is SLDEEEKLELQRRLAAQNQERRKSKS. S55 carries the post-translational modification Phosphoserine; by PKA. Residues 89 to 98 show a composition bias toward polar residues; the sequence is IHLQLSSFPS. Positions 101 to 127 are enriched in basic and acidic residues; it reads EEDKSRKDDSEREKEKDKNREKLSERP. S133 is modified (phosphoserine). The R3H domain maps to 163-226; the sequence is RMILLKMEQE…SVIINKTSST (64 aa). In terms of domain architecture, SUZ spans 227–298; it reads RIPEQRFCEH…VRERIFAHDS (72 aa). A disordered region spans residues 245–282; that stretch reads SQKRFILKRDNSSIDKEDNQNRMHPFRDDRRSKSIEER. 2 positions are modified to phosphoserine: N265 and S298. Disordered stretches follow at residues 328–434, 474–536, 552–576, and 595–627; these read LFRA…TSSV, GSIL…QPQM, SQLS…YPAS, and QLST…QQPP. A compositionally biased stretch (low complexity) spans 337 to 348; that stretch reads GRTSGSRQSSSE. Residues 349 to 358 show a composition bias toward basic and acidic residues; the sequence is TELRWPDHQR. A compositionally biased stretch (polar residues) spans 359–380; it reads AWSSTDSDSSNRNLKPTMTKTA. S361 and S381 each carry phosphoserine. A compositionally biased stretch (low complexity) spans 401–421; the sequence is GKLSKTGSESSSSAGSSGSLS. The span at 422–434 shows a compositional bias: polar residues; sequence RTHPQSTALTSSV. Pro residues predominate over residues 514–524; sequence QQPPQQQPSPQ. The span at 525–535 shows a compositional bias: low complexity; it reads PQQQVQASQPQ. Polar residues-rich tracts occupy residues 552–563 and 595–613; these read SQLSMSRQSSGD and QLST…QQVL. S557 bears the Phosphoserine mark. R650 is subject to Asymmetric dimethylarginine.

As to quaternary structure, interacts with CALM1. Post-translationally, phosphorylation of isoform 2 at Ser-55 is enhanced upon dopamine D1 receptor activation and favors interaction with CALM1. In terms of processing, methylated by CARM1 at Arg-650 in immature thymocytes. In terms of tissue distribution, present at high levels in thymus and low levels in brain. In thymus, isoform 1 is specifically found in immature thymocytes (at protein level).

The protein resides in the cytoplasm. In terms of biological role, may act as a competitive inhibitor of calmodulin-dependent enzymes such as calcineurin in neurons. The protein is cAMP-regulated phosphoprotein 21 (Arpp21) of Mus musculus (Mouse).